The primary structure comprises 512 residues: Acid-sensing ion channel 2 (512 aa).

The Cytoplasmic portion of the chain corresponds to 1 to 37 (MDLKESPSEGSLQPSSIQIFANTSTLHGIRHIFVYGP). Residues serine 8 and serine 11 each carry the phosphoserine modification. A helical transmembrane segment spans residues 38–58 (LTIRRVLWAVAFVGSLGLLLV). The Extracellular portion of the chain corresponds to 59–427 (ESSERVSYYF…EQKKAYEVAA (369 aa)). 6 cysteine pairs are disulfide-bonded: cysteine 92/cysteine 193, cysteine 289/cysteine 364, cysteine 307/cysteine 360, cysteine 311/cysteine 358, cysteine 320/cysteine 342, and cysteine 322/cysteine 334. N-linked (GlcNAc...) asparagine glycans are attached at residues asparagine 365 and asparagine 392. A helical transmembrane segment spans residues 428–448 (LLGDIGGQMGLFIGASLLTIL). The GAS motif; ion selectivity filter motif lies at 441–443 (GAS). The Cytoplasmic segment spans residues 449–512 (ELFDYIYELI…ALGTLEEIAC (64 aa)).

This sequence belongs to the amiloride-sensitive sodium channel (TC 1.A.6) family. ASIC2 subfamily. Can form homotrimers. Heterotrimer; forms functional heterotrimers producing channel with different properties. Forms heterotrimers with ASIC1; while ASIC1 determines current amplitude, ASIC2 influences the properties of the current. Forms heterotrimers with ASIC3; resulting in channels with distinct properties. Interacts with STOM; STOM regulates the gating of ASIC2-containing channels. Interacts with PICK1; promotes ASIC3 phosphorylation by PKC and activation of ASIC2/ASIC3 heterotrimers. As to expression, expressed in sciatic nerve and dorsal root ganglion (DRG) (at protein level). Both isoforms display the same expression pattern except in DRG where isoform 2 is more abundantly expressed. Widely distributed throughout the brain. Highly expressed in the main olfactory bulb, neo- and allo-cortical regions, hippocampal formation, habenula, basolateral amygdaloid nuclei, and cerebellum. In the olfactory system, expressed in the glomerular cell layer, the internal granular layer, and the mitral and internal plexiform cell layers. Within the glomerular layer, restricted to the periglomerular cells. In the neocortex, strongly expressed in the large pyramidal neurons in all cortical layers as well as in the oligo-, astro-, or micro-glia cells. In the hippocampal formation, expressed in dentate granule cells and hilar neurons, as well as in pyramidal cells of CA1-CA3 subfields. Expressed in stratum oriens and radiatum of all subfields. Within the thalamus, expressed moderately in the medial and lateral habenula. In the cerebellar cortex expressed in Purkinje cells and granule cells. Expressed at low levels in choroid plexus.

It localises to the cell membrane. The enzyme catalyses Na(+)(in) = Na(+)(out). It catalyses the reaction K(+)(in) = K(+)(out). It carries out the reaction Li(+)(in) = Li(+)(out). Inhibited by the diuretic drug amiloride. Inhibited by gadolinium ions, the heterotrimer with ASIC3 being more sensitive. Zn(2+) potentiates the acid activation of ASIC2-containing homomeric and heteromeric channels. The snake venom mambalgin-1 and mambalgin-2 inhibit the homotrimers composed of ASIC1 and ASIC2 and have strong analgesic effects. Forms pH-gated trimeric sodium channels that act as postsynaptic excitatory sensors in the nervous system. Upon extracellular acidification, these channels generate rapid, transient inward currents that fully desensitize. Highly selective for sodium, they are permeable to other cations. By forming heterotrimeric channels with ASIC1, could contribute to synaptic plasticity, learning, and memory. Additionally, as acid sensors at nerve terminals, plays a role in mechanosensation and phototransduction. Its function is as follows. Has no pH-gated sodium channel activity per se but can associate with other ASICs to produce functional channels with specific properties. The chain is Acid-sensing ion channel 2 from Rattus norvegicus (Rat).